A 218-amino-acid polypeptide reads, in one-letter code: Nucleoid occlusion factor SlmA (218 aa).

The HTH tetR-type domain occupies 30-90; it reads ERRQQVLTVL…ALIEHIESTL (61 aa). Positions 53–72 form a DNA-binding region, H-T-H motif; that stretch reads TTARLAKEVGVSEAALYRYF.

The protein belongs to the nucleoid occlusion factor SlmA family. As to quaternary structure, homodimer. Interacts with FtsZ.

The protein resides in the cytoplasm. It localises to the nucleoid. In terms of biological role, required for nucleoid occlusion (NO) phenomenon, which prevents Z-ring formation and cell division over the nucleoid. Acts as a DNA-associated cell division inhibitor that binds simultaneously chromosomal DNA and FtsZ, and disrupts the assembly of FtsZ polymers. SlmA-DNA-binding sequences (SBS) are dispersed on non-Ter regions of the chromosome, preventing FtsZ polymerization at these regions. The sequence is that of Nucleoid occlusion factor SlmA from Haemophilus influenzae (strain PittGG).